A 449-amino-acid chain; its full sequence is Procollagen C-endopeptidase enhancer 1 (449 aa).

An N-terminal signal peptide occupies residues 1–25; it reads MLPAATASLLGPLLTACALLPFAQG. Residue Asn-29 is glycosylated (N-linked (GlcNAc...) asparagine). Disulfide bonds link Cys-37–Cys-63, Cys-90–Cys-112, Cys-159–Cys-186, Cys-213–Cys-236, Cys-318–Cys-386, Cys-322–Cys-389, and Cys-333–Cys-437. 2 consecutive CUB domains span residues 37-149 and 159-273; these read CGGD…YSGR and CGGR…YKTL. Ser-50 is modified (phosphoserine). A disordered region spans residues 271–321; sequence KTLPRGTAKEGQGPGPKRGTEPKVKLPPKSQPPEKTEESPSAPDAPTCPKQ. The region spanning 318 to 437 is the NTR domain; sequence CPKQCRRTGT…ILTNLSKRKC (120 aa). Asn-431 is a glycosylation site (N-linked (GlcNAc...) asparagine).

As to quaternary structure, interacts with EFEMP2. Post-translationally, C-terminally processed at multiple positions.

It is found in the secreted. In terms of biological role, binds to the C-terminal propeptide of type I procollagen and enhances procollagen C-proteinase activity. Its function is as follows. C-terminal processed part of PCPE (CT-PCPE) may have an metalloproteinase inhibitory activity. The polypeptide is Procollagen C-endopeptidase enhancer 1 (PCOLCE) (Homo sapiens (Human)).